Here is a 112-residue protein sequence, read N- to C-terminus: Integration host factor subunit alpha (112 aa).

Belongs to the bacterial histone-like protein family. As to quaternary structure, heterodimer of an alpha and a beta chain.

Its function is as follows. This protein is one of the two subunits of integration host factor, a specific DNA-binding protein that functions in genetic recombination as well as in transcriptional and translational control. This chain is Integration host factor subunit alpha, found in Allorhizobium ampelinum (strain ATCC BAA-846 / DSM 112012 / S4) (Agrobacterium vitis (strain S4)).